A 153-amino-acid polypeptide reads, in one-letter code: NADPH-dependent 7-cyano-7-deazaguanine reductase (153 aa).

A compositionally biased stretch (polar residues) spans 1–17 (MTDTRNLTQLGSKTQAP). The segment at 1–23 (MTDTRNLTQLGSKTQAPASPEAA) is disordered. The Thioimide intermediate role is filled by cysteine 51. Catalysis depends on aspartate 58, which acts as the Proton donor. Residues 73-75 (VES) and 92-93 (HE) contribute to the substrate site.

Belongs to the GTP cyclohydrolase I family. QueF type 1 subfamily.

Its subcellular location is the cytoplasm. It catalyses the reaction 7-aminomethyl-7-carbaguanine + 2 NADP(+) = 7-cyano-7-deazaguanine + 2 NADPH + 3 H(+). The protein operates within tRNA modification; tRNA-queuosine biosynthesis. Its function is as follows. Catalyzes the NADPH-dependent reduction of 7-cyano-7-deazaguanine (preQ0) to 7-aminomethyl-7-deazaguanine (preQ1). This Chelativorans sp. (strain BNC1) protein is NADPH-dependent 7-cyano-7-deazaguanine reductase.